Reading from the N-terminus, the 415-residue chain is Acetylornithine aminotransferase (415 aa).

Pyridoxal 5'-phosphate contacts are provided by residues 115-116 (GA) and phenylalanine 148. Arginine 151 provides a ligand contact to N(2)-acetyl-L-ornithine. Pyridoxal 5'-phosphate is bound at residue 239–242 (DEVQ). Lysine 268 is subject to N6-(pyridoxal phosphate)lysine. Serine 295 is a binding site for N(2)-acetyl-L-ornithine. Threonine 296 lines the pyridoxal 5'-phosphate pocket.

The protein belongs to the class-III pyridoxal-phosphate-dependent aminotransferase family. ArgD subfamily. As to quaternary structure, homodimer. It depends on pyridoxal 5'-phosphate as a cofactor.

It is found in the cytoplasm. The catalysed reaction is N(2)-acetyl-L-ornithine + 2-oxoglutarate = N-acetyl-L-glutamate 5-semialdehyde + L-glutamate. It participates in amino-acid biosynthesis; L-arginine biosynthesis; N(2)-acetyl-L-ornithine from L-glutamate: step 4/4. The chain is Acetylornithine aminotransferase from Prochlorococcus marinus subsp. pastoris (strain CCMP1986 / NIES-2087 / MED4).